The following is a 272-amino-acid chain: MSIWRPPLHNVPGLEHLWYESVHRSHAAVCGCGDPVRHLTALAERYGIPGGSRSSGAPGVGGNHNPPQIRRARHPAAAPDPPAGNQPPALPWHGDGGNESGAGGGESGGPVADFADDGLDDLVAALDEEELLKTPAPSPPLKYPVAVTSLAEYKSSIRKSSDPATVSDPLTSDVTCLAARVLKESQNNKRLLSFYSPAANAPGSTFPSTSRQKKTSISKRDNKENRDRGRAKARAKQKPKKRRRRARSESSSSSSSKSSFNSEEGSSASSSS.

Disordered regions lie at residues glycine 50–aspartate 116 and tyrosine 195–serine 272. Residues alanine 78–leucine 90 are compositionally biased toward pro residues. Positions glycine 94 to glycine 108 are enriched in gly residues. Positions serine 218–arginine 230 are enriched in basic and acidic residues. The segment covering alanine 231 to alanine 246 has biased composition (basic residues). Residues glutamate 249 to serine 272 show a composition bias toward low complexity.

Phosphorylated at C-terminal serines.

This chain is Probable protein VP2, found in Homo sapiens (Human).